We begin with the raw amino-acid sequence, 623 residues long: Negative regulator of PDR1-mediated fluconazole resistance JJJ1 (623 aa).

The region spanning 4 to 70 is the J domain; sequence CYYDLLEVRS…QERAWYDSHK (67 aa). Residues 363 to 387 form a C2H2-type zinc finger; that stretch reads YDCFICKKSFKSEKQLENHIKTKLH. Disordered stretches follow at residues 448–476, 499–581, and 599–623; these read QSSV…KLSN, GADN…NDAK, and SHIQ…KKNK. Positions 453-466 are enriched in acidic residues; it reads DSEDFTDDNNDTED. Residues 499–508 are compositionally biased toward polar residues; the sequence is GADNSETQNA. Positions 525–538 are enriched in basic and acidic residues; the sequence is ELTRILRELEESKT. 2 stretches are compositionally biased toward basic residues: residues 553–564 and 612–623; these read KKKTKAKKKKNK and KVKKGKRSKKNK.

It localises to the nucleus. Its function is as follows. Acts as a negative regulator of fluconazole resistance, primarily through down-regulation of the ABC transporter gene CDR1 via inactivation of the PDR1 transcriptional pathway. This is Negative regulator of PDR1-mediated fluconazole resistance JJJ1 from Candida glabrata (strain ATCC 2001 / BCRC 20586 / JCM 3761 / NBRC 0622 / NRRL Y-65 / CBS 138) (Yeast).